The primary structure comprises 30 residues: uncharacterized protein (30 aa).

This is an uncharacterized protein from Treponema pallidum (strain Nichols).